Here is a 360-residue protein sequence, read N- to C-terminus: DNA replication and repair protein RecF (360 aa).

Position 30–37 (30–37 (GHNGSGKT)) interacts with ATP.

Belongs to the RecF family.

Its subcellular location is the cytoplasm. In terms of biological role, the RecF protein is involved in DNA metabolism; it is required for DNA replication and normal SOS inducibility. RecF binds preferentially to single-stranded, linear DNA. It also seems to bind ATP. The sequence is that of DNA replication and repair protein RecF from Haemophilus ducreyi (strain 35000HP / ATCC 700724).